A 413-amino-acid polypeptide reads, in one-letter code: Tyrosine--tRNA ligase (413 aa).

An L-tyrosine-binding site is contributed by Y34. A 'HIGH' region motif is present at residues P39 to H48. L-tyrosine contacts are provided by Y164 and Q168. The 'KMSKS' region signature appears at K225–S229. Position 228 (K228) interacts with ATP. Residues I347–F413 enclose the S4 RNA-binding domain.

It belongs to the class-I aminoacyl-tRNA synthetase family. TyrS type 1 subfamily. Homodimer.

It localises to the cytoplasm. The enzyme catalyses tRNA(Tyr) + L-tyrosine + ATP = L-tyrosyl-tRNA(Tyr) + AMP + diphosphate + H(+). Its function is as follows. Catalyzes the attachment of tyrosine to tRNA(Tyr) in a two-step reaction: tyrosine is first activated by ATP to form Tyr-AMP and then transferred to the acceptor end of tRNA(Tyr). The chain is Tyrosine--tRNA ligase from Aster yellows witches'-broom phytoplasma (strain AYWB).